A 100-amino-acid polypeptide reads, in one-letter code: Gas vesicle protein J (100 aa).

It belongs to the gas vesicle GvpA family. As to quaternary structure, interacts with GvpA.

It is found in the gas vesicle. Functionally, a minor component of the gas vesicle, might be involved in nucleating gas vesicle formation. This protein could be important for the shape determination of the gas vesicle. Gas vesicles (GV) are hollow, gas filled proteinaceous nanostructures. During planktonic growth they allow positioning of the organism at a favorable depth for light or nutrient acquisition. Its function is as follows. When a minimal gvp locus (gvpA2-gvpR-gvpN-gvpF-gvpG-gvpL-gvpS-gvpK-gvpJ-gvpT-gvpU, called pNL29) is expressed in E.coli gas vesicles are made. The protein is Gas vesicle protein J of Priestia megaterium (Bacillus megaterium).